We begin with the raw amino-acid sequence, 321 residues long: Aspartate carbamoyltransferase catalytic subunit (321 aa).

The carbamoyl phosphate site is built by Arg-65 and Thr-66. Lys-93 provides a ligand contact to L-aspartate. Carbamoyl phosphate-binding residues include Arg-115, His-143, and Gln-146. Residues Arg-176 and Arg-230 each contribute to the L-aspartate site. 2 residues coordinate carbamoyl phosphate: Gly-271 and Pro-272.

The protein belongs to the aspartate/ornithine carbamoyltransferase superfamily. ATCase family. In terms of assembly, heterododecamer (2C3:3R2) of six catalytic PyrB chains organized as two trimers (C3), and six regulatory PyrI chains organized as three dimers (R2).

The enzyme catalyses carbamoyl phosphate + L-aspartate = N-carbamoyl-L-aspartate + phosphate + H(+). Its pathway is pyrimidine metabolism; UMP biosynthesis via de novo pathway; (S)-dihydroorotate from bicarbonate: step 2/3. Its function is as follows. Catalyzes the condensation of carbamoyl phosphate and aspartate to form carbamoyl aspartate and inorganic phosphate, the committed step in the de novo pyrimidine nucleotide biosynthesis pathway. This chain is Aspartate carbamoyltransferase catalytic subunit, found in Bartonella tribocorum (strain CIP 105476 / IBS 506).